A 332-amino-acid polypeptide reads, in one-letter code: Glycerol-3-phosphate dehydrogenase [NAD(P)+] (332 aa).

Trp13, Arg33, and Lys105 together coordinate NADPH. Sn-glycerol 3-phosphate-binding residues include Lys105, Gly134, and Ser136. Residue Ala138 participates in NADPH binding. Residues Lys189, Asp242, Ser252, Arg253, and Asn254 each contribute to the sn-glycerol 3-phosphate site. Lys189 (proton acceptor) is an active-site residue. NADPH is bound at residue Arg253. Glu279 provides a ligand contact to NADPH.

This sequence belongs to the NAD-dependent glycerol-3-phosphate dehydrogenase family.

It localises to the cytoplasm. It carries out the reaction sn-glycerol 3-phosphate + NAD(+) = dihydroxyacetone phosphate + NADH + H(+). The catalysed reaction is sn-glycerol 3-phosphate + NADP(+) = dihydroxyacetone phosphate + NADPH + H(+). Its pathway is membrane lipid metabolism; glycerophospholipid metabolism. Catalyzes the reduction of the glycolytic intermediate dihydroxyacetone phosphate (DHAP) to sn-glycerol 3-phosphate (G3P), the key precursor for phospholipid synthesis. The protein is Glycerol-3-phosphate dehydrogenase [NAD(P)+] of Halorhodospira halophila (strain DSM 244 / SL1) (Ectothiorhodospira halophila (strain DSM 244 / SL1)).